A 593-amino-acid polypeptide reads, in one-letter code: Bifunctional purine biosynthesis protein ATIC (593 aa).

One can recognise an MGS-like domain in the interval 1–147 (MAARQQLALL…KNHARVTVVC (147 aa)). The IMP cyclohydrolase stretch occupies residues 1-199 (MAARQQLALL…ISDYFRKEYS (199 aa)). IMP is bound by residues 13–15 (SEK), 35–38 (SGGT), 65–68 (RVKT), 102–103 (CN), and 126–127 (DI). K138 acts as the Proton donor/acceptor; for FAICAR cyclization activity in catalysis. K200 is modified (N6-acetyllysine). The AICAR formyltransferase stretch occupies residues 200–593 (KGVSQLPLRY…IHTNLRLFHH (394 aa)). 5-amino-1-(5-phospho-beta-D-ribosyl)imidazole-4-carboxamide contacts are provided by residues 208–209 (RY), H268, G317, D340, N432, and R452. H268 acts as the Proton acceptor; for AICAR formyltransferase activity in catalysis. A (6R)-10-formyltetrahydrofolate-binding site is contributed by I453. F542 contacts 5-amino-1-(5-phospho-beta-D-ribosyl)imidazole-4-carboxamide. Residues D547 and 566-567 (SA) each bind (6R)-10-formyltetrahydrofolate. A 5-amino-1-(5-phospho-beta-D-ribosyl)imidazole-4-carboxamide-binding site is contributed by R589.

This sequence belongs to the PurH family. In terms of assembly, homodimer. Associates with internalized INSR complexes on Golgi/endosomal membranes. Interacts with INSR; ATIC together with PRKAA2/AMPK2 and HACD3/PTPLAD1 is proposed to be part of a signaling network regulating INSR autophosphorylation and endocytosis.

The protein resides in the cytoplasm. The protein localises to the cytosol. The catalysed reaction is (6R)-10-formyltetrahydrofolate + 5-amino-1-(5-phospho-beta-D-ribosyl)imidazole-4-carboxamide = 5-formamido-1-(5-phospho-D-ribosyl)imidazole-4-carboxamide + (6S)-5,6,7,8-tetrahydrofolate. It catalyses the reaction 10-formyldihydrofolate + 5-amino-1-(5-phospho-beta-D-ribosyl)imidazole-4-carboxamide = 5-formamido-1-(5-phospho-D-ribosyl)imidazole-4-carboxamide + 7,8-dihydrofolate. The enzyme catalyses IMP + H2O = 5-formamido-1-(5-phospho-D-ribosyl)imidazole-4-carboxamide. It participates in purine metabolism; IMP biosynthesis via de novo pathway; 5-formamido-1-(5-phospho-D-ribosyl)imidazole-4-carboxamide from 5-amino-1-(5-phospho-D-ribosyl)imidazole-4-carboxamide (10-formyl THF route): step 1/1. The protein operates within purine metabolism; IMP biosynthesis via de novo pathway; IMP from 5-formamido-1-(5-phospho-D-ribosyl)imidazole-4-carboxamide: step 1/1. With respect to regulation, AMP and XMP inhibit AICAR formyltransferase activity. AICAR formyltransferase activity is competitively inhibited by 2-[5-hydroxy-3-methyl-1-(2-methyl-4-sulfo-phenyl)-1H-pyrazol-4-ylazo]-4-sulfo-benzoic acid (326203-A). FAICAR cyclization is competitively inhibited by 1,5-dihydroimidazo[4,5-c][1,2,6]thiadiazin-4(3H)-one-2,2-dioxide and the corresponding nucleoside and nucleoside monophosphate. Functionally, bifunctional enzyme that catalyzes the last two steps of purine biosynthesis. Acts as a transformylase that incorporates a formyl group to the AMP analog AICAR (5-amino-1-(5-phospho-beta-D-ribosyl)imidazole-4-carboxamide) to produce the intermediate formyl-AICAR (FAICAR). Can use both 10-formyldihydrofolate and 10-formyltetrahydrofolate as the formyl donor in this reaction. Also catalyzes the cyclization of FAICAR to inosine monophosphate (IMP). Promotes insulin receptor/INSR autophosphorylation and is involved in INSR internalization. The chain is Bifunctional purine biosynthesis protein ATIC (ATIC) from Gallus gallus (Chicken).